Consider the following 425-residue polypeptide: Terminal nucleotidyltransferase 5B (425 aa).

Positions 1-42 (MMPSESGAERRDRAAAQVGTAAATAVATAAPAGGGPDPEALS) are disordered. Positions 15 to 31 (AAQVGTAAATAVATAAP) are enriched in low complexity.

The protein belongs to the TENT family.

Its subcellular location is the cytoplasm. The protein resides in the nucleus. The catalysed reaction is RNA(n) + ATP = RNA(n)-3'-adenine ribonucleotide + diphosphate. Its function is as follows. Catalyzes the transfer of one adenosine molecule from an ATP to an mRNA poly(A) tail bearing a 3'-OH terminal group in an ATP hydrolysis-dependent manner. May be involved in maintaining the translation efficiency of at least some genes through preventing degradation of their mRNAs. Prefers RNA molecules that are adenosine-rich close to 3'-end. In addition, may inhibit cell proliferation and cell cycle progression through ubiquitination of beta-catenin/CTNNB1. This chain is Terminal nucleotidyltransferase 5B, found in Homo sapiens (Human).